The sequence spans 157 residues: uncharacterized protein (157 aa).

The N-acetyltransferase domain occupies 9–154 (LLINYKTLDE…ETNSNAITNE (146 aa)).

This is an uncharacterized protein from Bacillus mycoides (strain KBAB4) (Bacillus weihenstephanensis).